The primary structure comprises 213 residues: Serine acetyltransferase (213 aa).

The protein belongs to the transferase hexapeptide repeat family.

It localises to the cytoplasm. It catalyses the reaction L-serine + acetyl-CoA = O-acetyl-L-serine + CoA. Its pathway is amino-acid biosynthesis; L-cysteine biosynthesis; L-cysteine from L-serine: step 1/2. This is Serine acetyltransferase (cysE) from Staphylococcus epidermidis (strain ATCC 35984 / DSM 28319 / BCRC 17069 / CCUG 31568 / BM 3577 / RP62A).